A 305-amino-acid chain; its full sequence is Dihydroorotate dehydrogenase A (fumarate) (305 aa).

Residues S21 and 45-46 contribute to the FMN site; that span reads KS. Substrate contacts are provided by residues K45, 69–73, and N129; that span reads NAIGL. N129 is an FMN binding site. C132 serves as the catalytic Nucleophile. FMN is bound by residues K167 and I193. 194-195 contributes to the substrate binding site; the sequence is NT. FMN is bound by residues G219 and 245-246; that span reads GG.

This sequence belongs to the dihydroorotate dehydrogenase family. Type 1 subfamily. Homodimer. The cofactor is FMN.

It is found in the cytoplasm. The enzyme catalyses (S)-dihydroorotate + fumarate = orotate + succinate. Its pathway is pyrimidine metabolism; UMP biosynthesis via de novo pathway. In terms of biological role, catalyzes the conversion of dihydroorotate to orotate with fumarate as the electron acceptor. This chain is Dihydroorotate dehydrogenase A (fumarate) (pyrD), found in Lactiplantibacillus plantarum (strain ATCC BAA-793 / NCIMB 8826 / WCFS1) (Lactobacillus plantarum).